Here is a 513-residue protein sequence, read N- to C-terminus: 2,3-bisphosphoglycerate-independent phosphoglycerate mutase (513 aa).

Mn(2+) contacts are provided by aspartate 13 and serine 63. Serine 63 acts as the Phosphoserine intermediate in catalysis. Residues histidine 124, 154 to 155 (RD), arginine 186, arginine 192, 262 to 265 (RADR), and lysine 335 each bind substrate. Mn(2+) contacts are provided by aspartate 402, histidine 406, aspartate 443, histidine 444, and histidine 462.

This sequence belongs to the BPG-independent phosphoglycerate mutase family. Monomer. Mn(2+) is required as a cofactor.

The enzyme catalyses (2R)-2-phosphoglycerate = (2R)-3-phosphoglycerate. It participates in carbohydrate degradation; glycolysis; pyruvate from D-glyceraldehyde 3-phosphate: step 3/5. In terms of biological role, catalyzes the interconversion of 2-phosphoglycerate and 3-phosphoglycerate. The sequence is that of 2,3-bisphosphoglycerate-independent phosphoglycerate mutase from Shewanella amazonensis (strain ATCC BAA-1098 / SB2B).